A 254-amino-acid chain; its full sequence is Leucyl/phenylalanyl-tRNA--protein transferase (254 aa).

This sequence belongs to the L/F-transferase family.

The protein localises to the cytoplasm. It catalyses the reaction N-terminal L-lysyl-[protein] + L-leucyl-tRNA(Leu) = N-terminal L-leucyl-L-lysyl-[protein] + tRNA(Leu) + H(+). It carries out the reaction N-terminal L-arginyl-[protein] + L-leucyl-tRNA(Leu) = N-terminal L-leucyl-L-arginyl-[protein] + tRNA(Leu) + H(+). The enzyme catalyses L-phenylalanyl-tRNA(Phe) + an N-terminal L-alpha-aminoacyl-[protein] = an N-terminal L-phenylalanyl-L-alpha-aminoacyl-[protein] + tRNA(Phe). In terms of biological role, functions in the N-end rule pathway of protein degradation where it conjugates Leu, Phe and, less efficiently, Met from aminoacyl-tRNAs to the N-termini of proteins containing an N-terminal arginine or lysine. In Burkholderia ambifaria (strain MC40-6), this protein is Leucyl/phenylalanyl-tRNA--protein transferase.